Here is a 757-residue protein sequence, read N- to C-terminus: uncharacterized protein (757 aa).

In terms of domain architecture, S1 motif spans 640–709 (GMILEGVVSN…ARKRIALTMR (70 aa)). Residues 711-741 (DDEPGGAKHKMPSENRSRERTAGRKPQRNDR) are compositionally biased toward basic and acidic residues. A disordered region spans residues 711 to 757 (DDEPGGAKHKMPSENRSRERTAGRKPQRNDRAPANSAMADAFAKLKR).

This is an uncharacterized protein from Neisseria meningitidis serogroup B (strain ATCC BAA-335 / MC58).